Here is an 899-residue protein sequence, read N- to C-terminus: DNA mismatch repair protein MutS (899 aa).

A disordered region spans residues 1 to 20 (MGLQKKTDPEQAQADSAASR). 631-638 (GPNMGGKS) provides a ligand contact to ATP. The tract at residues 832–852 (PPTPDDDEDDFGAAPSAVPAP) is disordered. Over residues 843 to 852 (GAAPSAVPAP) the composition is skewed to low complexity.

This sequence belongs to the DNA mismatch repair MutS family.

Functionally, this protein is involved in the repair of mismatches in DNA. It is possible that it carries out the mismatch recognition step. This protein has a weak ATPase activity. The protein is DNA mismatch repair protein MutS of Cupriavidus necator (strain ATCC 17699 / DSM 428 / KCTC 22496 / NCIMB 10442 / H16 / Stanier 337) (Ralstonia eutropha).